The chain runs to 147 residues: Large ribosomal subunit protein uL15 (147 aa).

Positions methionine 1–methionine 55 are disordered. A compositionally biased stretch (gly residues) spans isoleucine 23 to methionine 35.

This sequence belongs to the universal ribosomal protein uL15 family. Part of the 50S ribosomal subunit.

Functionally, binds to the 23S rRNA. The polypeptide is Large ribosomal subunit protein uL15 (Synechococcus elongatus (strain ATCC 33912 / PCC 7942 / FACHB-805) (Anacystis nidulans R2)).